The chain runs to 478 residues: Proline--tRNA ligase (478 aa).

The protein belongs to the class-II aminoacyl-tRNA synthetase family. ProS type 3 subfamily. As to quaternary structure, homodimer.

The protein resides in the cytoplasm. The enzyme catalyses tRNA(Pro) + L-proline + ATP = L-prolyl-tRNA(Pro) + AMP + diphosphate. Its function is as follows. Catalyzes the attachment of proline to tRNA(Pro) in a two-step reaction: proline is first activated by ATP to form Pro-AMP and then transferred to the acceptor end of tRNA(Pro). The sequence is that of Proline--tRNA ligase from Clostridium botulinum (strain Langeland / NCTC 10281 / Type F).